A 624-amino-acid chain; its full sequence is Basal cell adhesion molecule (624 aa).

A signal peptide spans 1–25 (MEPPDARAGLLWLTLLLSGYSGAQA). 2 consecutive Ig-like V-type domains span residues 26-136 (ELHV…SSVR) and 141-251 (PEAT…HTFR). Residues 26–543 (ELHVSVPPRV…GSVAPQTAQA (518 aa)) are Extracellular-facing. Disulfide bonds link Cys47–Cys119, Cys166–Cys231, and Cys285–Cys331. Ig-like C2-type domains follow at residues 268–343 (PSTT…EEVQ), 357–436 (PLEL…QSFQ), and 443–534 (PELK…FHFG). 3 N-linked (GlcNAc...) asparagine glycosylation sites follow: Asn315, Asn371, and Asn378. Intrachain disulfides connect Cys379-Cys419 and Cys468-Cys518. The segment at 477–497 (KLTWSQRGDTTPAEPPFEGRG) is disordered. Residues 544 to 564 (GVAVMAVAVSVGLLLLVVAAF) traverse the membrane as a helical segment. Topologically, residues 565–624 (YCMRRKGRPGCCQRAEKGAPPAREPELSHSGSERPEHTGLLMGGPSGGGRGGNGGFGDEC) are cytoplasmic. Residues 574 to 624 (GCCQRAEKGAPPAREPELSHSGSERPEHTGLLMGGPSGGGRGGNGGFGDEC) form a disordered region. Residues 587–601 (REPELSHSGSERPEH) are compositionally biased toward basic and acidic residues. Residues Ser592, Ser594, and Ser596 each carry the phosphoserine modification. Residues 605–624 (LMGGPSGGGRGGNGGFGDEC) are compositionally biased toward gly residues.

In terms of assembly, homodimer. Interacts with ITGA4:ITGB1. Interacts with spectrins SPTA1 and SPTB1.

The protein localises to the cell membrane. Its function is as follows. Transmembrane glycoprotein that functions as both a receptor and an adhesion molecule playing a crucial role in cell adhesion, motility, migration and invasion. Extracellular domain enables binding to extracellular matrix proteins, such as laminin, integrin and other ligands while its intracellular domain interacts with cytoskeletal proteins like hemoglobin, facilitating cell signal transduction. Serves as a receptor for laminin alpha-5/LAMA5 to promote cell adhesion. Mechanistically, JAK2 induces BCAM phosphorylation and activates its adhesion to laminin by stimulating a Rap1/AKT signaling pathway in the absence of EPOR. This is Basal cell adhesion molecule (Bcam) from Rattus norvegicus (Rat).